The following is a 64-amino-acid chain: Large ribosomal subunit protein bL35 (64 aa).

Composition is skewed to basic residues over residues 1–15 (MPKNKTHSGASKRFK) and 27–42 (AGKRHLLEHKSSKKTR). A disordered region spans residues 1–45 (MPKNKTHSGASKRFKITGSGKVLRERAGKRHLLEHKSSKKTRSLT).

It belongs to the bacterial ribosomal protein bL35 family.

This chain is Large ribosomal subunit protein bL35, found in Streptomyces griseus subsp. griseus (strain JCM 4626 / CBS 651.72 / NBRC 13350 / KCC S-0626 / ISP 5235).